A 381-amino-acid polypeptide reads, in one-letter code: MSNKQNIESEVSWVKSKGAFVHPSLEFSVIPDAGSCVLANNDINENTVLLKLPPNILINKRTCSRYSFRDKLTSFQFLSWLISEDVHSNLEISPYYTKALPQGFSFHPVTLTSDHPLWSILPDEVRNSLLERKNVMAFDYEQVKKFVSVDQPTFQWGWLCVNTRCLYYDTGSKNTEDHLTLAPIFEYFNHSPEAQTALINTRGTITIKSTRRIDKGEQIFLCYGPHGNDKLFTEYGFCLSNNPNISIQLDRFIEFDKWQQSFLQDHGYWNDYTCSLHGASFRTLVGVRTLLVSPSEKLNDASYDQTRRVLQYINGFSDGSRDRQDVEDYLKKVLQELLCEAEECKEKVKGISDGSYVFICAEQLWKDRIMCCQYLMEHSFE.

Residues 23-224 form the SET domain; the sequence is PSLEFSVIPD…KGEQIFLCYG (202 aa). Position 223 (Y223) interacts with S-adenosyl-L-methionine.

It belongs to the class V-like SAM-binding methyltransferase superfamily. RKM2 family.

It is found in the cytoplasm. The protein resides in the nucleus. Its subcellular location is the nucleolus. Its function is as follows. S-adenosyl-L-methionine-dependent protein-lysine N-methyltransferase that trimethylates 60S ribosomal protein L12 (rpl1201 and rpl1202) at 'Lys-4' and may dimethylate L12 also at 'Lys-40' and 'Lys-41'. Overexpression causes a severe growth defect. Has a role in meiosis. The polypeptide is Ribosomal lysine N-methyltransferase set11 (set11) (Schizosaccharomyces pombe (strain 972 / ATCC 24843) (Fission yeast)).